The following is a 773-amino-acid chain: Protein YhgF (773 aa).

Positions glycine 651 to arginine 720 constitute an S1 motif domain. Residues leucine 721–arginine 773 are disordered.

In Escherichia coli (strain K12), this protein is Protein YhgF (yhgF).